The primary structure comprises 338 residues: MDRIVEIEKVSFESEFEVSLRPSSFDDYIGQEKIKQNLDVFIKAAKKRGECLDHVLFYGPPGLGKTTLAHIIANEMAVSIKMTAAPMIEKSGDLAAILTNLQEGDVLFIDEIHRLSPAIEEVLYPAMEDFRLDIIIGSGPAAQTIKIDLPKFTLIGATTRAGMISAPLRDRFGMDFRLQFYSTAELSRIIQIASVKLGKECDKAAALEIAKRARATPRIALRLLKRIRDFAEVNDEAMISHERAKEGLNALGVNSLGFDEMDIKYLEILLDAKRRPLGLSTIAAALSEDEGTVEDVIEPYLLANGFIERTAKGRIASEKCFETFKIKLNRTKGLFDGE.

Residues 1-181 (MDRIVEIEKV…FGMDFRLQFY (181 aa)) form a large ATPase domain (RuvB-L) region. ATP is bound by residues Leu20, Arg21, Gly62, Lys65, Thr66, Thr67, 128–130 (EDF), Arg171, Tyr181, and Arg218. Thr66 contacts Mg(2+). The small ATPAse domain (RuvB-S) stretch occupies residues 182–252 (STAELSRIIQ…RAKEGLNALG (71 aa)). The head domain (RuvB-H) stretch occupies residues 255 to 338 (SLGFDEMDIK…NRTKGLFDGE (84 aa)). DNA-binding residues include Arg309 and Arg314.

The protein belongs to the RuvB family. As to quaternary structure, homohexamer. Forms an RuvA(8)-RuvB(12)-Holliday junction (HJ) complex. HJ DNA is sandwiched between 2 RuvA tetramers; dsDNA enters through RuvA and exits via RuvB. An RuvB hexamer assembles on each DNA strand where it exits the tetramer. Each RuvB hexamer is contacted by two RuvA subunits (via domain III) on 2 adjacent RuvB subunits; this complex drives branch migration. In the full resolvosome a probable DNA-RuvA(4)-RuvB(12)-RuvC(2) complex forms which resolves the HJ.

The protein localises to the cytoplasm. The catalysed reaction is ATP + H2O = ADP + phosphate + H(+). Functionally, the RuvA-RuvB-RuvC complex processes Holliday junction (HJ) DNA during genetic recombination and DNA repair, while the RuvA-RuvB complex plays an important role in the rescue of blocked DNA replication forks via replication fork reversal (RFR). RuvA specifically binds to HJ cruciform DNA, conferring on it an open structure. The RuvB hexamer acts as an ATP-dependent pump, pulling dsDNA into and through the RuvAB complex. RuvB forms 2 homohexamers on either side of HJ DNA bound by 1 or 2 RuvA tetramers; 4 subunits per hexamer contact DNA at a time. Coordinated motions by a converter formed by DNA-disengaged RuvB subunits stimulates ATP hydrolysis and nucleotide exchange. Immobilization of the converter enables RuvB to convert the ATP-contained energy into a lever motion, pulling 2 nucleotides of DNA out of the RuvA tetramer per ATP hydrolyzed, thus driving DNA branch migration. The RuvB motors rotate together with the DNA substrate, which together with the progressing nucleotide cycle form the mechanistic basis for DNA recombination by continuous HJ branch migration. Branch migration allows RuvC to scan DNA until it finds its consensus sequence, where it cleaves and resolves cruciform DNA. In Campylobacter curvus (strain 525.92), this protein is Holliday junction branch migration complex subunit RuvB.